A 183-amino-acid polypeptide reads, in one-letter code: Ribulose bisphosphate carboxylase small subunit, chloroplastic 5 (183 aa).

A chloroplast-targeting transit peptide spans 1 to 42 (MAAAMMNKSVLLNKQCGKPAAVPKVVMSKGGFARTSAVNKNR).

Belongs to the RuBisCO small chain family. Heterohexadecamer of 8 large and 8 small subunits.

It localises to the plastid. It is found in the chloroplast. Its function is as follows. RuBisCO catalyzes two reactions: the carboxylation of D-ribulose 1,5-bisphosphate, the primary event in carbon dioxide fixation, as well as the oxidative fragmentation of the pentose substrate. Both reactions occur simultaneously and in competition at the same active site. Although the small subunit is not catalytic it is essential for maximal activity. The protein is Ribulose bisphosphate carboxylase small subunit, chloroplastic 5 of Acetabularia acetabulum (Mermaid's wine glass).